Reading from the N-terminus, the 263-residue chain is 4-hydroxy-tetrahydrodipicolinate reductase (263 aa).

An NAD(+)-binding site is contributed by 10 to 15 (GASGKM). Arg-38 serves as a coordination point for NADP(+). NAD(+)-binding positions include 97 to 99 (GTT) and 123 to 126 (APNF). Catalysis depends on His-153, which acts as the Proton donor/acceptor. His-154 contributes to the (S)-2,3,4,5-tetrahydrodipicolinate binding site. Lys-157 functions as the Proton donor in the catalytic mechanism. 163 to 164 (GT) contributes to the (S)-2,3,4,5-tetrahydrodipicolinate binding site.

Belongs to the DapB family.

The protein localises to the cytoplasm. It carries out the reaction (S)-2,3,4,5-tetrahydrodipicolinate + NAD(+) + H2O = (2S,4S)-4-hydroxy-2,3,4,5-tetrahydrodipicolinate + NADH + H(+). It catalyses the reaction (S)-2,3,4,5-tetrahydrodipicolinate + NADP(+) + H2O = (2S,4S)-4-hydroxy-2,3,4,5-tetrahydrodipicolinate + NADPH + H(+). It functions in the pathway amino-acid biosynthesis; L-lysine biosynthesis via DAP pathway; (S)-tetrahydrodipicolinate from L-aspartate: step 4/4. Functionally, catalyzes the conversion of 4-hydroxy-tetrahydrodipicolinate (HTPA) to tetrahydrodipicolinate. This is 4-hydroxy-tetrahydrodipicolinate reductase from Dehalococcoides mccartyi (strain ATCC BAA-2266 / KCTC 15142 / 195) (Dehalococcoides ethenogenes (strain 195)).